Here is a 224-residue protein sequence, read N- to C-terminus: Large ribosomal subunit protein uL4 (224 aa).

The interval 53–74 (RNRSEVSHSTKKPFKQKGTGNA) is disordered.

It belongs to the universal ribosomal protein uL4 family. Part of the 50S ribosomal subunit.

In terms of biological role, one of the primary rRNA binding proteins, this protein initially binds near the 5'-end of the 23S rRNA. It is important during the early stages of 50S assembly. It makes multiple contacts with different domains of the 23S rRNA in the assembled 50S subunit and ribosome. Functionally, forms part of the polypeptide exit tunnel. In Chlamydia pneumoniae (Chlamydophila pneumoniae), this protein is Large ribosomal subunit protein uL4.